The following is an 85-amino-acid chain: MAEPSADPTPTAKPAATLKKGALVRVNRTSYLGSVEASASDPRPPEYIFEGPGELLLVKGEYGQVRWRRPVPDVWLKLSQLEVFS.

Belongs to the complex I NdhO subunit family. In terms of assembly, NDH-1 can be composed of about 15 different subunits; different subcomplexes with different compositions have been identified which probably have different functions.

It localises to the cellular thylakoid membrane. It carries out the reaction a plastoquinone + NADH + (n+1) H(+)(in) = a plastoquinol + NAD(+) + n H(+)(out). The catalysed reaction is a plastoquinone + NADPH + (n+1) H(+)(in) = a plastoquinol + NADP(+) + n H(+)(out). In terms of biological role, NDH-1 shuttles electrons from an unknown electron donor, via FMN and iron-sulfur (Fe-S) centers, to quinones in the respiratory and/or the photosynthetic chain. The immediate electron acceptor for the enzyme in this species is believed to be plastoquinone. Couples the redox reaction to proton translocation, and thus conserves the redox energy in a proton gradient. Cyanobacterial NDH-1 also plays a role in inorganic carbon-concentration. The chain is NAD(P)H-quinone oxidoreductase subunit O from Synechococcus sp. (strain CC9311).